Consider the following 440-residue polypeptide: uncharacterized protein (440 aa).

Disordered stretches follow at residues 49–81 (CPPA…EPSL) and 162–295 (LPKP…CASE). Polar residues predominate over residues 55 to 80 (HGHSSLRTNLNSSPPRCPQNPGTEPS). Basic and acidic residues predominate over residues 249–266 (YREELSNTKSRFSEDKGS). Low complexity predominate over residues 274-284 (SSNSSEPGLPG).

It belongs to the tymoviridae protein p69 family.

This is an uncharacterized protein from Erysimum latent virus (ELV).